A 180-amino-acid chain; its full sequence is FMN reductase (NADH) RutF (180 aa).

This sequence belongs to the non-flavoprotein flavin reductase family. RutF subfamily.

The catalysed reaction is FMNH2 + NAD(+) = FMN + NADH + 2 H(+). In terms of biological role, catalyzes the reduction of FMN to FMNH2 which is used to reduce pyrimidine by RutA via the Rut pathway. The protein is FMN reductase (NADH) RutF of Variovorax paradoxus (strain S110).